Here is a 675-residue protein sequence, read N- to C-terminus: Sodium/myo-inositol cotransporter 2 (675 aa).

At 1-27 the chain is on the extracellular side; the sequence is MESGTSSPQPPQLDPLDAFPQKGLEPG. The chain crosses the membrane as a helical span at residues 28 to 48; that stretch reads DIAVLVLYFLFVLAVGLWSTV. Topologically, residues 49-65 are cytoplasmic; that stretch reads KTKRDTVKGYFLAGGDM. A helical transmembrane segment spans residues 66 to 88; the sequence is VWWPVGASLFASNVGSGHFIGLA. Residues 89 to 102 are Extracellular-facing; it reads GSGAATGISVSAYE. A helical membrane pass occupies residues 103-123; sequence LNGLFSVLMLAWIFLPIYIAG. At 124 to 135 the chain is on the cytoplasmic side; the sequence is QVTTMPEYLRKR. Residues 136-156 form a helical membrane-spanning segment; sequence FGGIRIPIILAVLYLFIYIFT. The Extracellular segment spans residues 157–180; the sequence is KISVDMYAGAIFIQQSLHLDLYLA. Residues 181-201 form a helical membrane-spanning segment; it reads IVGLLAITAVYTVAGGLAAVI. At 202–208 the chain is on the cytoplasmic side; that stretch reads YTDALQT. The helical transmembrane segment at 209 to 229 threads the bilayer; the sequence is LIMLIGALTLMGYSFAAVGGM. Over 230 to 272 the chain is Extracellular; it reads EGLKEKYFLALASNRSENSSCGLPREDAFHIFRDPLTSDLPWP. A helical membrane pass occupies residues 273–293; it reads GVLFGMSIPSLWYWCTDQVIV. The Cytoplasmic portion of the chain corresponds to 294-308; that stretch reads QRTLAAKNLSHAKGG. A helical membrane pass occupies residues 309 to 329; the sequence is ALMAAYLKVLPLFIMVFPGMV. Residues 330-375 lie on the Extracellular side of the membrane; it reads SRILFPDQVACADPEICQKICSNPSGCSDIAYPKLVLELLPTGLRG. Residues 376 to 396 form a helical membrane-spanning segment; that stretch reads LMMAVMVAALMSSLTSIFNSA. Residues 397–418 are Cytoplasmic-facing; the sequence is STIFTMDLWNHLRPRASEKELM. A helical transmembrane segment spans residues 419–439; that stretch reads IVGRVFVLLLVLVSILWIPVV. Over 440 to 446 the chain is Extracellular; it reads QASQGGQ. A helical transmembrane segment spans residues 447–467; the sequence is LFIYIQSISSYLQPPVAVVFI. The Cytoplasmic segment spans residues 468-479; the sequence is MGCFWKRTNEKG. A helical membrane pass occupies residues 480-500; the sequence is AFWGLISGLLLGLVRLVLDFI. Residues 501-521 are Extracellular-facing; sequence YVQPRCDQPDERPVLVKSIHY. The helical transmembrane segment at 522 to 542 threads the bilayer; that stretch reads LYFSMILSTVTLITVSTVSWF. Residues 543-654 are Cytoplasmic-facing; it reads TEPPSKEMVS…SLEENPLVKT (112 aa). The helical transmembrane segment at 655-675 threads the bilayer; it reads LLDVNLIFCVSCAIFIWGYFA.

This sequence belongs to the sodium:solute symporter (SSF) (TC 2.A.21) family. In terms of tissue distribution, highest expression in heart, skeletal muscle, kidney, liver and placenta. Weaker expression in brain, colon, spleen, lung and peripheral blood leukocytes.

Its subcellular location is the membrane. It localises to the apical cell membrane. The catalysed reaction is myo-inositol(out) + 2 Na(+)(out) = myo-inositol(in) + 2 Na(+)(in). It catalyses the reaction 1D-chiro-inositol(out) + 2 Na(+)(out) = 1D-chiro-inositol(in) + 2 Na(+)(in). The enzyme catalyses D-glucose(out) + 2 Na(+)(out) = D-glucose(in) + 2 Na(+)(in). It carries out the reaction D-xylose(out) + 2 Na(+)(out) = D-xylose(in) + 2 Na(+)(in). MI transport activity inhibited by D-chiro-inositol (DCI), phlorizin (Pz) and sodium (Na(+)). Insulin increases D-chiro-inositol uptake. Functionally, involved in the sodium-dependent cotransport of myo-inositol (MI) with a Na(+):MI stoichiometry of 2:1. Exclusively responsible for apical MI transport and absorption in intestine. Can also transport D-chiro-inositol (DCI) but not L-fucose. Exhibits stereospecific cotransport of both D-glucose and D-xylose. May induce apoptosis through the TNF-alpha, PDCD1 pathway. May play a role in the regulation of MI concentration in serum, involving reabsorption in at least the proximal tubule of the kidney. This chain is Sodium/myo-inositol cotransporter 2, found in Homo sapiens (Human).